The primary structure comprises 198 residues: MNLLMGYTYLIPILFASYLIGSIPFSWILVKVFYKRDLRSVGSGNIGATNAFRVNRGISFLVLLLDIFKSVLVILILEKMCAHKSIMYLTGFTVVLGHIFPVWFLFKGGKGIAPTIGVVLSINIKIFFLFIITWAVVFMIFRYSSLSSIISIISSCIYCAVTENFNSSIFYIAMSIIVLIKHRDNVIRMINGTEKKLF.

5 helical membrane passes run 10–30, 57–77, 86–106, 118–138, and 160–180; these read LIPI…WILV, GISF…ILIL, IMYL…WFLF, VVLS…AVVF, and AVTE…IVLI.

Belongs to the PlsY family. As to quaternary structure, probably interacts with PlsX.

It localises to the cell inner membrane. It catalyses the reaction an acyl phosphate + sn-glycerol 3-phosphate = a 1-acyl-sn-glycero-3-phosphate + phosphate. It functions in the pathway lipid metabolism; phospholipid metabolism. In terms of biological role, catalyzes the transfer of an acyl group from acyl-phosphate (acyl-PO(4)) to glycerol-3-phosphate (G3P) to form lysophosphatidic acid (LPA). This enzyme utilizes acyl-phosphate as fatty acyl donor, but not acyl-CoA or acyl-ACP. The chain is Glycerol-3-phosphate acyltransferase from Anaplasma marginale (strain Florida).